We begin with the raw amino-acid sequence, 114 residues long: Probable non-functional T cell receptor beta variable 5-3 (114 aa).

The N-terminal stretch at 1–21 is a signal peptide; the sequence is MGPGLLCWELLYLLGAGPVEA. Residues 22 to 114 form the Ig-like domain; it reads GVTQSPTHLI…SALYLCARSL (93 aa). A disulfide bond links Cys42 and Cys110. Asn96 carries an N-linked (GlcNAc...) asparagine glycan.

As to quaternary structure, alpha-beta TR is a heterodimer composed of an alpha and beta chain; disulfide-linked. The alpha-beta TR is associated with the transmembrane signaling CD3 coreceptor proteins to form the TR-CD3 (TcR or TCR). The assembly of alpha-beta TR heterodimers with CD3 occurs in the endoplasmic reticulum where a single alpha-beta TR heterodimer associates with one CD3D-CD3E heterodimer, one CD3G-CD3E heterodimer and one CD247 homodimer forming a stable octameric structure. CD3D-CD3E and CD3G-CD3E heterodimers preferentially associate with TR alpha and TR beta chains, respectively. The association of the CD247 homodimer is the last step of TcR assembly in the endoplasmic reticulum and is required for transport to the cell surface.

The protein resides in the cell membrane. Functionally, probable non-functional open reading frame (ORF) of V region of the variable domain of T cell receptor (TR) beta chain. Non-functional ORF generally cannot participate in the synthesis of a productive T cell receptor (TR) chain due to altered V-(D)-J or switch recombination and/or splicing site (at mRNA level) and/or conserved amino acid change (protein level). Alpha-beta T cell receptors are antigen specific receptors which are essential to the immune response and are present on the cell surface of T lymphocytes. Recognize peptide-major histocompatibility (MH) (pMH) complexes that are displayed by antigen presenting cells (APC), a prerequisite for efficient T cell adaptive immunity against pathogens. Binding of alpha-beta TR to pMH complex initiates TR-CD3 clustering on the cell surface and intracellular activation of LCK that phosphorylates the ITAM motifs of CD3G, CD3D, CD3E and CD247 enabling the recruitment of ZAP70. In turn ZAP70 phosphorylates LAT, which recruits numerous signaling molecules to form the LAT signalosome. The LAT signalosome propagates signal branching to three major signaling pathways, the calcium, the mitogen-activated protein kinase (MAPK) kinase and the nuclear factor NF-kappa-B (NF-kB) pathways, leading to the mobilization of transcription factors that are critical for gene expression and essential for T cell growth and differentiation. The T cell repertoire is generated in the thymus, by V-(D)-J rearrangement. This repertoire is then shaped by intrathymic selection events to generate a peripheral T cell pool of self-MH restricted, non-autoaggressive T cells. Post-thymic interaction of alpha-beta TR with the pMH complexes shapes TR structural and functional avidity. The polypeptide is Probable non-functional T cell receptor beta variable 5-3 (Homo sapiens (Human)).